The primary structure comprises 504 residues: ATP synthase subunit beta (504 aa).

Residues 1–23 are disordered; sequence MAKAATPKETAAAKKPAAPKKAA. Residue 182-189 participates in ATP binding; the sequence is GGAGVGKT.

The protein belongs to the ATPase alpha/beta chains family. In terms of assembly, F-type ATPases have 2 components, CF(1) - the catalytic core - and CF(0) - the membrane proton channel. CF(1) has five subunits: alpha(3), beta(3), gamma(1), delta(1), epsilon(1). CF(0) has three main subunits: a(1), b(2) and c(9-12). The alpha and beta chains form an alternating ring which encloses part of the gamma chain. CF(1) is attached to CF(0) by a central stalk formed by the gamma and epsilon chains, while a peripheral stalk is formed by the delta and b chains.

It localises to the cell inner membrane. It carries out the reaction ATP + H2O + 4 H(+)(in) = ADP + phosphate + 5 H(+)(out). Functionally, produces ATP from ADP in the presence of a proton gradient across the membrane. The catalytic sites are hosted primarily by the beta subunits. The polypeptide is ATP synthase subunit beta (Rhizobium meliloti (strain 1021) (Ensifer meliloti)).